The chain runs to 458 residues: tRNA-2-methylthio-N(6)-dimethylallyladenosine synthase (458 aa).

Residues 15–134 (KKVFIKTYGC…LPELLQQAQQ (120 aa)) enclose the MTTase N-terminal domain. [4Fe-4S] cluster contacts are provided by Cys24, Cys60, Cys97, Cys175, Cys179, and Cys182. In terms of domain architecture, Radical SAM core spans 161–393 (QKRGVSAFLT…QALLLDQQHR (233 aa)). One can recognise a TRAM domain in the interval 396–457 (RSKIGQTTDV…SNSFVGEKAN (62 aa)).

It belongs to the methylthiotransferase family. MiaB subfamily. As to quaternary structure, monomer. The cofactor is [4Fe-4S] cluster.

The protein resides in the cytoplasm. The catalysed reaction is N(6)-dimethylallyladenosine(37) in tRNA + (sulfur carrier)-SH + AH2 + 2 S-adenosyl-L-methionine = 2-methylsulfanyl-N(6)-dimethylallyladenosine(37) in tRNA + (sulfur carrier)-H + 5'-deoxyadenosine + L-methionine + A + S-adenosyl-L-homocysteine + 2 H(+). Catalyzes the methylthiolation of N6-(dimethylallyl)adenosine (i(6)A), leading to the formation of 2-methylthio-N6-(dimethylallyl)adenosine (ms(2)i(6)A) at position 37 in tRNAs that read codons beginning with uridine. This Bartonella bacilliformis (strain ATCC 35685 / KC583 / Herrer 020/F12,63) protein is tRNA-2-methylthio-N(6)-dimethylallyladenosine synthase.